Here is a 416-residue protein sequence, read N- to C-terminus: Interleukin-1 receptor type 2 (416 aa).

The signal sequence occupies residues Met-1 to Ala-13. Topologically, residues Phe-14–Glu-355 are extracellular. Ig-like C2-type domains follow at residues Pro-29–Lys-136, Pro-146–Thr-233, and Pro-249–Ser-357. 3 disulfides stabilise this stretch: Cys-42-Cys-128, Cys-64-Cys-120, and Cys-164-Cys-219. Asn-124, Asn-208, Asn-231, and Asn-289 each carry an N-linked (GlcNAc...) asparagine glycan. Cys-270 and Cys-338 form a disulfide bridge. The chain crosses the membrane as a helical span at residues Val-356–Ile-381. Residues Arg-382–Lys-416 lie on the Cytoplasmic side of the membrane. Positions Thr-396–Lys-416 are disordered. A compositionally biased stretch (polar residues) spans Pro-399–Lys-416.

It belongs to the interleukin-1 receptor family. In terms of assembly, associates with IL1RAP to form a non-signaling interleukin-1 receptor complex. In terms of processing, a soluble form (sIL1R2) can also be produced by proteolytic cleavage at the cell surface (shedding) involving a metalloproteinase.

The protein localises to the membrane. It is found in the cell membrane. The protein resides in the secreted. Functionally, non-signaling receptor for IL1A, IL1B and IL1RN. Reduces IL1B activities. Serves as a decoy receptor by competitive binding to IL1B and preventing its binding to IL1R1. Also modulates cellular response through non-signaling association with IL1RAP after binding to IL1B. IL1R2 (membrane and secreted forms) preferentially binds IL1B and poorly IL1A and IL1RN. The secreted IL1R2 recruits secreted IL1RAP with high affinity; this complex formation may be the dominant mechanism for neutralization of IL1B by secreted/soluble receptors. The polypeptide is Interleukin-1 receptor type 2 (Il1r2) (Rattus norvegicus (Rat)).